A 35-amino-acid chain; its full sequence is Putative gene 58 protein (35 aa).

This is Putative gene 58 protein (58) from Bacillus phage SP01 (Bacteriophage SP01).